The following is a 298-amino-acid chain: ATP synthase gamma chain (298 aa).

This sequence belongs to the ATPase gamma chain family. In terms of assembly, F-type ATPases have 2 components, CF(1) - the catalytic core - and CF(0) - the membrane proton channel. CF(1) has five subunits: alpha(3), beta(3), gamma(1), delta(1), epsilon(1). CF(0) has three main subunits: a, b and c.

Its subcellular location is the cell inner membrane. In terms of biological role, produces ATP from ADP in the presence of a proton gradient across the membrane. The gamma chain is believed to be important in regulating ATPase activity and the flow of protons through the CF(0) complex. The protein is ATP synthase gamma chain of Desulforapulum autotrophicum (strain ATCC 43914 / DSM 3382 / VKM B-1955 / HRM2) (Desulfobacterium autotrophicum).